Reading from the N-terminus, the 329-residue chain is Beta-ketoacyl-[acyl-carrier-protein] synthase III (329 aa).

Active-site residues include cysteine 123 and histidine 256. Residues 257-261 are ACP-binding; it reads QANIR. Asparagine 286 is a catalytic residue.

This sequence belongs to the thiolase-like superfamily. FabH family. Homodimer.

The protein resides in the cytoplasm. It catalyses the reaction malonyl-[ACP] + acetyl-CoA + H(+) = 3-oxobutanoyl-[ACP] + CO2 + CoA. It functions in the pathway lipid metabolism; fatty acid biosynthesis. Functionally, catalyzes the condensation reaction of fatty acid synthesis by the addition to an acyl acceptor of two carbons from malonyl-ACP. Catalyzes the first condensation reaction which initiates fatty acid synthesis and may therefore play a role in governing the total rate of fatty acid production. Possesses both acetoacetyl-ACP synthase and acetyl transacylase activities. Its substrate specificity determines the biosynthesis of branched-chain and/or straight-chain of fatty acids. The polypeptide is Beta-ketoacyl-[acyl-carrier-protein] synthase III (Burkholderia vietnamiensis (strain G4 / LMG 22486) (Burkholderia cepacia (strain R1808))).